A 29-amino-acid chain; its full sequence is AIPCGESCVWIPCISAAIGCSCKNKVCYR.

The segment at residues 1 to 29 (AIPCGESCVWIPCISAAIGCSCKNKVCYR) is a cross-link (cyclopeptide (Ala-Arg)). Disulfide bonds link cysteine 4–cysteine 20, cysteine 8–cysteine 22, and cysteine 13–cysteine 27.

In terms of processing, this is a cyclic peptide.

Probably participates in a plant defense mechanism. Inhibits the cytopathic effects of the human immunodeficiency virus. The chain is Circulin-F from Chassalia parviflora.